The chain runs to 66 residues: Early E3 7.7 kDa protein (66 aa).

Residues Asn-7 and Asn-24 are each glycosylated (N-linked (GlcNAc...) asparagine; by host). Residues 44-64 (ITILIVIGILILSVILYFLFS) traverse the membrane as a helical segment.

The protein resides in the host nucleus membrane. The chain is Early E3 7.7 kDa protein from Human adenovirus B serotype 7 (HAdV-7).